Here is a 336-residue protein sequence, read N- to C-terminus: F420-dependent glucose-6-phosphate dehydrogenase (336 aa).

D39 is a binding site for coenzyme F420-(gamma-Glu)n. H40 functions as the Proton donor in the catalytic mechanism. Residues T76 and 107–108 (TG) contribute to the coenzyme F420-(gamma-Glu)n site. E109 (proton acceptor) is an active-site residue. Coenzyme F420-(gamma-Glu)n-binding positions include N112, 177–178 (GG), and 180–181 (EV). Residues T195, K198, K259, and R283 each contribute to the substrate site.

Belongs to the F420-dependent glucose-6-phosphate dehydrogenase family. As to quaternary structure, homodimer.

It carries out the reaction oxidized coenzyme F420-(gamma-L-Glu)(n) + D-glucose 6-phosphate + H(+) = 6-phospho-D-glucono-1,5-lactone + reduced coenzyme F420-(gamma-L-Glu)(n). Its function is as follows. Catalyzes the coenzyme F420-dependent oxidation of glucose 6-phosphate (G6P) to 6-phosphogluconolactone. Appears to have a role in resistance to oxidative stress, via its consumption of G6P that serves as a source of reducing power to combat oxidative stress in mycobacteria. This chain is F420-dependent glucose-6-phosphate dehydrogenase, found in Mycobacterium leprae (strain Br4923).